We begin with the raw amino-acid sequence, 309 residues long: tRNA dimethylallyltransferase (309 aa).

9–16 lines the ATP pocket; it reads GPTAVGKT. 11–16 is a binding site for substrate; that stretch reads TAVGKT. The tract at residues 34–37 is interaction with substrate tRNA; it reads DSMQ.

This sequence belongs to the IPP transferase family. Monomer. Mg(2+) serves as cofactor.

It catalyses the reaction adenosine(37) in tRNA + dimethylallyl diphosphate = N(6)-dimethylallyladenosine(37) in tRNA + diphosphate. Its function is as follows. Catalyzes the transfer of a dimethylallyl group onto the adenine at position 37 in tRNAs that read codons beginning with uridine, leading to the formation of N6-(dimethylallyl)adenosine (i(6)A). The sequence is that of tRNA dimethylallyltransferase from Enterococcus faecalis (strain ATCC 700802 / V583).